The chain runs to 446 residues: Exodeoxyribonuclease 7 large subunit (446 aa).

This sequence belongs to the XseA family. In terms of assembly, heterooligomer composed of large and small subunits.

Its subcellular location is the cytoplasm. It carries out the reaction Exonucleolytic cleavage in either 5'- to 3'- or 3'- to 5'-direction to yield nucleoside 5'-phosphates.. In terms of biological role, bidirectionally degrades single-stranded DNA into large acid-insoluble oligonucleotides, which are then degraded further into small acid-soluble oligonucleotides. The polypeptide is Exodeoxyribonuclease 7 large subunit (Vibrio cholerae serotype O1 (strain ATCC 39541 / Classical Ogawa 395 / O395)).